The primary structure comprises 271 residues: Orotidine 5'-phosphate decarboxylase (271 aa).

Lys-95 acts as the Proton donor in catalysis.

This sequence belongs to the OMP decarboxylase family. Type 2 subfamily.

It carries out the reaction orotidine 5'-phosphate + H(+) = UMP + CO2. It functions in the pathway pyrimidine metabolism; UMP biosynthesis via de novo pathway; UMP from orotate: step 2/2. This chain is Orotidine 5'-phosphate decarboxylase (pyrF), found in Ralstonia nicotianae (strain ATCC BAA-1114 / GMI1000) (Ralstonia solanacearum).